An 87-amino-acid polypeptide reads, in one-letter code: uncharacterized protein (87 aa).

The signal sequence occupies residues 1-19; the sequence is MLVLQLAVLVTAVYAFVHA. The helical transmembrane segment at 51-71 threads the bilayer; sequence ILGFVFGVLGIVIAACAAGVY.

The protein to M.tuberculosis Rv0476.

It is found in the membrane. This is an uncharacterized protein from Mycobacterium leprae (strain TN).